A 309-amino-acid polypeptide reads, in one-letter code: Putative G-protein coupled receptor B0244.4 (309 aa).

6 helical membrane passes run 39 to 59 (SIIF…ACFL), 82 to 102 (YIFM…MLAL), 114 to 134 (IYFL…GSYV), 162 to 182 (FAIA…MFQA), 204 to 224 (IMLV…SFVL), and 256 to 276 (WTLF…FYLV).

The protein belongs to the G-protein coupled receptor 1 family. B0244 subfamily.

It is found in the cell membrane. The chain is Putative G-protein coupled receptor B0244.4 from Caenorhabditis elegans.